We begin with the raw amino-acid sequence, 180 residues long: Ribulose bisphosphate carboxylase small subunit 1A, chloroplastic (180 aa).

The transit peptide at methionine 1–asparagine 54 directs the protein to the chloroplast. Serine 113 is subject to Phosphoserine.

The protein belongs to the RuBisCO small chain family. As to quaternary structure, heterohexadecamer of 8 large and 8 small subunits.

The protein localises to the plastid. It is found in the chloroplast membrane. The protein resides in the chloroplast stroma. Its function is as follows. RuBisCO catalyzes two reactions: the carboxylation of D-ribulose 1,5-bisphosphate, the primary event in carbon dioxide fixation, as well as the oxidative fragmentation of the pentose substrate. Both reactions occur simultaneously and in competition at the same active site. Although the small subunit is not catalytic it is essential for maximal activity. This is Ribulose bisphosphate carboxylase small subunit 1A, chloroplastic (RBCS-1A) from Arabidopsis thaliana (Mouse-ear cress).